A 690-amino-acid polypeptide reads, in one-letter code: Methionine--tRNA ligase 1 (690 aa).

Residues 11 to 21 (PYANGHIHIGH) carry the 'HIGH' region motif. 4 residues coordinate Zn(2+): Cys142, Cys145, Cys155, and Cys158. Residues 328-332 (KMSKS) carry the 'KMSKS' region motif. Lys331 provides a ligand contact to ATP. The region spanning 590–690 (DFSKVDLRVA…SGAKPGMRVH (101 aa)) is the tRNA-binding domain.

This sequence belongs to the class-I aminoacyl-tRNA synthetase family. MetG type 1 subfamily. Homodimer. Zn(2+) serves as cofactor.

It is found in the cytoplasm. It carries out the reaction tRNA(Met) + L-methionine + ATP = L-methionyl-tRNA(Met) + AMP + diphosphate. Functionally, is required not only for elongation of protein synthesis but also for the initiation of all mRNA translation through initiator tRNA(fMet) aminoacylation. This Sorangium cellulosum (strain So ce56) (Polyangium cellulosum (strain So ce56)) protein is Methionine--tRNA ligase 1.